Consider the following 105-residue polypeptide: Large ribosomal subunit protein eL42 (105 aa).

The tract at residues 28–57 (YKKGKDSLAAQGKRRYDRKQSGYGGQTKPV) is disordered.

Belongs to the eukaryotic ribosomal protein eL42 family.

This chain is Large ribosomal subunit protein eL42 (RPL44), found in Gossypium hirsutum (Upland cotton).